We begin with the raw amino-acid sequence, 118 residues long: Large ribosomal subunit protein uL22 (118 aa).

This sequence belongs to the universal ribosomal protein uL22 family. In terms of assembly, part of the 50S ribosomal subunit.

Functionally, this protein binds specifically to 23S rRNA; its binding is stimulated by other ribosomal proteins, e.g. L4, L17, and L20. It is important during the early stages of 50S assembly. It makes multiple contacts with different domains of the 23S rRNA in the assembled 50S subunit and ribosome. The globular domain of the protein is located near the polypeptide exit tunnel on the outside of the subunit, while an extended beta-hairpin is found that lines the wall of the exit tunnel in the center of the 70S ribosome. The protein is Large ribosomal subunit protein uL22 of Synechococcus sp. (strain RCC307).